The primary structure comprises 462 residues: Glycoprotein endo-alpha-1,2-mannosidase (462 aa).

The Cytoplasmic portion of the chain corresponds to 1-8; the sequence is MAKFRRGT. A helical; Signal-anchor for type II membrane protein transmembrane segment spans residues 9-29; that stretch reads CIILALFILFIFSLMMGLKML. At 30–462 the chain is on the lumenal side; the sequence is RPNTATFGAP…YALDHQLPVS (433 aa). The interval 60–462 is catalytic; the sequence is DFQKSDRINS…YALDHQLPVS (403 aa).

Belongs to the glycosyl hydrolase 99 family. Post-translationally, undergoes proteolytic cleavage in the C-terminal region.

Its subcellular location is the golgi apparatus membrane. The catalysed reaction is N-{alpha-Glc-(1-&gt;3)-alpha-Man-(1-&gt;2)-alpha-Man-(1-&gt;2)-alpha-Man-(1-&gt;3)-[alpha-Man-(1-&gt;2)-alpha-Man-(1-&gt;3)-[alpha-Man-(1-&gt;2)-alpha-Man-(1-&gt;6)]-alpha-Man-(1-&gt;6)]-beta-Man-(1-&gt;4)-beta-GlcNAc-(1-&gt;4)-beta-GlcNAc}-L-asparaginyl-[protein] + H2O = alpha-D-glucosyl-(1-&gt;3)-D-mannopyranose + N(4)-{alpha-D-Man-(1-&gt;2)-alpha-D-Man-(1-&gt;3)-[alpha-D-Man-(1-&gt;2)-alpha-D-Man-(1-&gt;3)-[alpha-D-Man-(1-&gt;2)-alpha-D-Man-(1-&gt;6)]-alpha-D-Man-(1-&gt;6)]-beta-D-Man-(1-&gt;4)-beta-D-GlaNAc-(1-&gt;4)-beta-D-GlcNAc}-L-asparaginyl-[protein] (N-glucan mannose isomer 8A1,2,3B1,2). This Pongo abelii (Sumatran orangutan) protein is Glycoprotein endo-alpha-1,2-mannosidase (MANEA).